Here is a 133-residue protein sequence, read N- to C-terminus: ATP synthase epsilon chain (133 aa).

It belongs to the ATPase epsilon chain family. F-type ATPases have 2 components, CF(1) - the catalytic core - and CF(0) - the membrane proton channel. CF(1) has five subunits: alpha(3), beta(3), gamma(1), delta(1), epsilon(1). CF(0) has three main subunits: a, b and c.

The protein resides in the cell membrane. Produces ATP from ADP in the presence of a proton gradient across the membrane. The protein is ATP synthase epsilon chain of Staphylococcus haemolyticus (strain JCSC1435).